Consider the following 202-residue polypeptide: Na(+)-translocating NADH-quinone reductase subunit E (202 aa).

6 helical membrane passes run 11-31 (AVFIENLALSFFLGMCTFLAV), 35-55 (VTTSIGLGVAVIVVLGISVPV), 81-101 (FLRFLTFIGVIAALVQILEMA), 114-134 (GIFLPLITVNCAIFGAVSFMV), 144-164 (VVYGIGAGVGWALAITLLAGI), and 180-200 (LGITFITVGLMALGFMSFSGI).

Belongs to the NqrDE/RnfAE family. In terms of assembly, composed of six subunits; NqrA, NqrB, NqrC, NqrD, NqrE and NqrF.

Its subcellular location is the cell inner membrane. The enzyme catalyses a ubiquinone + n Na(+)(in) + NADH + H(+) = a ubiquinol + n Na(+)(out) + NAD(+). NQR complex catalyzes the reduction of ubiquinone-1 to ubiquinol by two successive reactions, coupled with the transport of Na(+) ions from the cytoplasm to the periplasm. NqrA to NqrE are probably involved in the second step, the conversion of ubisemiquinone to ubiquinol. This Pseudoalteromonas translucida (strain TAC 125) protein is Na(+)-translocating NADH-quinone reductase subunit E.